Consider the following 152-residue polypeptide: Large ribosomal subunit protein uL13 (152 aa).

The disordered stretch occupies residues 130-152 (HPHEAQSPEVLDLASKNPKNTRS).

This sequence belongs to the universal ribosomal protein uL13 family. Part of the 50S ribosomal subunit.

This protein is one of the early assembly proteins of the 50S ribosomal subunit, although it is not seen to bind rRNA by itself. It is important during the early stages of 50S assembly. The polypeptide is Large ribosomal subunit protein uL13 (Dinoroseobacter shibae (strain DSM 16493 / NCIMB 14021 / DFL 12)).